The primary structure comprises 79 residues: Defensin-like protein 54 (79 aa).

Residues 1–27 form the signal peptide; that stretch reads MGIKKTSATVFLVIILTISFSYYDVEA. 4 disulfides stabilise this stretch: cysteine 39/cysteine 76, cysteine 43/cysteine 67, cysteine 52/cysteine 74, and cysteine 56/cysteine 75.

It belongs to the DEFL family.

Its subcellular location is the secreted. The protein is Defensin-like protein 54 of Arabidopsis thaliana (Mouse-ear cress).